The primary structure comprises 485 residues: Efflux pump bik6 (485 aa).

6 consecutive transmembrane segments (helical) span residues 42–62, 86–106, 108–128, 139–159, 172–192, and 199–219; these read VYTT…SAIY, LLIF…EVYG, KWPA…TATA, FFAG…IVDI, YGIT…AFIA, and WTEY…ALWL. Residue Asn-241 is glycosylated (N-linked (GlcNAc...) asparagine). 6 helical membrane-spanning segments follow: residues 269–289, 306–326, 353–373, 379–399, 417–437, and 447–467; these read MLLD…YAIL, WGPV…LFAA, LPPM…FGWT, SSPW…TTIF, AIAA…LFVW, and WGST…FLFF.

The protein belongs to the major facilitator superfamily.

It is found in the membrane. Its function is as follows. Efflux pump; part of the gene cluster that mediates the biosynthesis of bikaverin, a red pigment also considered as a mycotoxin. This chain is Efflux pump bik6, found in Gibberella fujikuroi (strain CBS 195.34 / IMI 58289 / NRRL A-6831) (Bakanae and foot rot disease fungus).